The chain runs to 189 residues: Coatomer subunit zeta (189 aa).

It belongs to the adaptor complexes small subunit family. In terms of assembly, oligomeric complex that consists of at least the alpha, beta, beta', gamma, delta, epsilon and zeta subunits.

It localises to the cytoplasm. It is found in the golgi apparatus membrane. The protein localises to the cytoplasmic vesicle. Its subcellular location is the COPI-coated vesicle membrane. The coatomer is a cytosolic protein complex that binds to dilysine motifs and reversibly associates with Golgi non-clathrin-coated vesicles, which further mediate biosynthetic protein transport from the ER, via the Golgi up to the trans Golgi network. Coatomer complex is required for budding from Golgi membranes, and is essential for the retrograde Golgi-to-ER transport of dilysine-tagged proteins. The zeta subunit may be involved in regulating the coat assembly and, hence, the rate of biosynthetic protein transport due to its association-dissociation properties with the coatomer complex. The polypeptide is Coatomer subunit zeta (RET3) (Saccharomyces cerevisiae (strain ATCC 204508 / S288c) (Baker's yeast)).